The sequence spans 98 residues: Large ribosomal subunit protein eL30 (98 aa).

This sequence belongs to the eukaryotic ribosomal protein eL30 family.

The protein is Large ribosomal subunit protein eL30 (rpl30e) of Methanothermobacter thermautotrophicus (strain ATCC 29096 / DSM 1053 / JCM 10044 / NBRC 100330 / Delta H) (Methanobacterium thermoautotrophicum).